The chain runs to 440 residues: C4-dicarboxylate transport protein (440 aa).

Transmembrane regions (helical) follow at residues 8 to 28 (LYLQ…LFPA), 40 to 60 (FIKL…VTGI), 74 to 94 (LKGL…GLVV), 147 to 167 (GDIL…AALK), 187 to 207 (IVGF…AFTV), 221 to 241 (LIAC…GLVL), 288 to 308 (VVGL…SIYL), and 354 to 374 (AATL…LLGV). The segment at 419–440 (EEVEPANEPEPPAIPAGAGLHG) is disordered.

This sequence belongs to the dicarboxylate/amino acid:cation symporter (DAACS) (TC 2.A.23) family.

The protein localises to the cell inner membrane. Responsible for the transport of dicarboxylates such as succinate, fumarate, and malate from the periplasm across the membrane. In Anaeromyxobacter sp. (strain K), this protein is C4-dicarboxylate transport protein.